A 345-amino-acid polypeptide reads, in one-letter code: UDP-N-acetylenolpyruvoylglucosamine reductase (345 aa).

In terms of domain architecture, FAD-binding PCMH-type spans 15–218; sequence VDVYAEKVII…NTIIFLRYKK (204 aa). Arginine 161 is a catalytic residue. Residue serine 230 is the Proton donor of the active site. Glutamate 327 is a catalytic residue.

Belongs to the MurB family. The cofactor is FAD.

The protein resides in the cytoplasm. The enzyme catalyses UDP-N-acetyl-alpha-D-muramate + NADP(+) = UDP-N-acetyl-3-O-(1-carboxyvinyl)-alpha-D-glucosamine + NADPH + H(+). Its pathway is cell wall biogenesis; peptidoglycan biosynthesis. Functionally, cell wall formation. In Blochmanniella floridana, this protein is UDP-N-acetylenolpyruvoylglucosamine reductase.